The primary structure comprises 434 residues: Arginine/serine-rich coiled-coil protein 2 (434 aa).

The span at 1–27 (MAASDTERDGLAPEKTSPDRDKKKEQS) shows a compositional bias: basic and acidic residues. Residues 1 to 230 (MAASDTERDG…PSPPPFRGRN (230 aa)) are disordered. At Ala-2 the chain carries N-acetylalanine. Position 4 is a phosphoserine (Ser-4). 2 positions are modified to phosphothreonine: Thr-6 and Thr-16. Ser-17, Ser-30, and Ser-32 each carry phosphoserine. Positions 35-51 (ASKHHYSRSRSRSRERK) are enriched in basic residues. The span at 66-111 (RSKEGRRHESKDKSSKKHKSEEHNDKEHSSDKGRERLNSSENGEDR) shows a compositional bias: basic and acidic residues. Phosphoserine is present on Ser-104. A compositionally biased stretch (basic residues) spans 112 to 214 (HKRKERKSSR…KRIEKPRRFS (103 aa)). A coiled-coil region spans residues 230–270 (NTAMDAQEALARRLERAKKLQEQREKEMVEKQKQQEIAAAA). Lys-375 participates in a covalent cross-link: Glycyl lysine isopeptide (Lys-Gly) (interchain with G-Cter in SUMO1); alternate. Residue Lys-375 forms a Glycyl lysine isopeptide (Lys-Gly) (interchain with G-Cter in SUMO2); alternate linkage. Residue Ser-376 is modified to Phosphoserine.

Belongs to the RSRC2 family.

The protein is Arginine/serine-rich coiled-coil protein 2 (RSRC2) of Homo sapiens (Human).